The primary structure comprises 466 residues: Asparagine--tRNA ligase (466 aa).

The protein belongs to the class-II aminoacyl-tRNA synthetase family. Homodimer.

The protein resides in the cytoplasm. The enzyme catalyses tRNA(Asn) + L-asparagine + ATP = L-asparaginyl-tRNA(Asn) + AMP + diphosphate + H(+). This chain is Asparagine--tRNA ligase, found in Enterobacter sp. (strain 638).